Reading from the N-terminus, the 260-residue chain is Ribosome maturation factor RimP (260 aa).

The tract at residues Gln198–Glu260 is disordered. 2 stretches are compositionally biased toward basic and acidic residues: residues Ala210 to Lys228 and Asn238 to Ile254.

Belongs to the RimP family.

The protein localises to the cytoplasm. Its function is as follows. Required for maturation of 30S ribosomal subunits. The protein is Ribosome maturation factor RimP of Nitrobacter winogradskyi (strain ATCC 25391 / DSM 10237 / CIP 104748 / NCIMB 11846 / Nb-255).